The chain runs to 205 residues: Proteasome subunit beta type-3 (205 aa).

The protein belongs to the peptidase T1B family. In terms of assembly, the 26S proteasome consists of a 20S proteasome core and two 19S regulatory subunits. The 20S proteasome core is composed of 28 subunits that are arranged in four stacked rings, resulting in a barrel-shaped structure. The two end rings are each formed by seven alpha subunits, and the two central rings are each formed by seven beta subunits. The catalytic chamber with the active sites is on the inside of the barrel.

The protein localises to the cytoplasm. The protein resides in the nucleus. In terms of biological role, non-catalytic component of the proteasome, a multicatalytic proteinase complex which is characterized by its ability to cleave peptides with Arg, Phe, Tyr, Leu, and Glu adjacent to the leaving group at neutral or slightly basic pH. The proteasome has an ATP-dependent proteolytic activity. The chain is Proteasome subunit beta type-3 (PSB3) from Trypanosoma brucei brucei.